The sequence spans 213 residues: LexA repressor 2 (213 aa).

Positions 27–47 (QTEIARAFGFKGVRAAQYHLE) form a DNA-binding region, H-T-H motif. Residues serine 133 and lysine 170 each act as for autocatalytic cleavage activity in the active site.

It belongs to the peptidase S24 family. In terms of assembly, homodimer.

It carries out the reaction Hydrolysis of Ala-|-Gly bond in repressor LexA.. Represses a number of genes involved in the response to DNA damage (SOS response), including recA and lexA. In the presence of single-stranded DNA, RecA interacts with LexA causing an autocatalytic cleavage which disrupts the DNA-binding part of LexA, leading to derepression of the SOS regulon and eventually DNA repair. The polypeptide is LexA repressor 2 (Xanthomonas campestris pv. campestris (strain ATCC 33913 / DSM 3586 / NCPPB 528 / LMG 568 / P 25)).